The chain runs to 369 residues: Cobalt-precorrin-5B C(1)-methyltransferase (369 aa).

Belongs to the CbiD family.

It carries out the reaction Co-precorrin-5B + S-adenosyl-L-methionine = Co-precorrin-6A + S-adenosyl-L-homocysteine. It participates in cofactor biosynthesis; adenosylcobalamin biosynthesis; cob(II)yrinate a,c-diamide from sirohydrochlorin (anaerobic route): step 6/10. In terms of biological role, catalyzes the methylation of C-1 in cobalt-precorrin-5B to form cobalt-precorrin-6A. The polypeptide is Cobalt-precorrin-5B C(1)-methyltransferase (Leptospira borgpetersenii serovar Hardjo-bovis (strain JB197)).